The chain runs to 762 residues: 5-methyltetrahydropteroyltriglutamate--homocysteine methyltransferase (762 aa).

5-methyltetrahydropteroyltri-L-glutamate is bound by residues 17-20 and lysine 111; that span reads REWK. Residues 435-437 and glutamate 488 each bind L-homocysteine; that span reads IGS. L-methionine contacts are provided by residues 435–437 and glutamate 488; that span reads IGS. 5-methyltetrahydropteroyltri-L-glutamate is bound by residues 519-520 and tryptophan 565; that span reads RC. L-homocysteine is bound at residue aspartate 603. Aspartate 603 contributes to the L-methionine binding site. Glutamate 609 contributes to the 5-methyltetrahydropteroyltri-L-glutamate binding site. The Zn(2+) site is built by histidine 645, cysteine 647, and glutamate 669. Histidine 698 acts as the Proton donor in catalysis. Cysteine 730 lines the Zn(2+) pocket.

Belongs to the vitamin-B12 independent methionine synthase family. Zn(2+) serves as cofactor.

The enzyme catalyses 5-methyltetrahydropteroyltri-L-glutamate + L-homocysteine = tetrahydropteroyltri-L-glutamate + L-methionine. It participates in amino-acid biosynthesis; L-methionine biosynthesis via de novo pathway; L-methionine from L-homocysteine (MetE route): step 1/1. In terms of biological role, catalyzes the transfer of a methyl group from 5-methyltetrahydrofolate to homocysteine resulting in methionine formation. This is 5-methyltetrahydropteroyltriglutamate--homocysteine methyltransferase from Bacillus cereus (strain ZK / E33L).